We begin with the raw amino-acid sequence, 161 residues long: Large ribosomal subunit protein uL15 (161 aa).

The segment covering 1–13 (MKLNELRDNEGAA) has biased composition (basic and acidic residues). The tract at residues 1–51 (MKLNELRDNEGAARKKKRVARGPGSGKGKTAGRGIKGQKSRSGVALNGYEG) is disordered. Residues 23 to 35 (PGSGKGKTAGRGI) show a composition bias toward gly residues.

This sequence belongs to the universal ribosomal protein uL15 family. As to quaternary structure, part of the 50S ribosomal subunit.

In terms of biological role, binds to the 23S rRNA. This Cereibacter sphaeroides (strain ATCC 17023 / DSM 158 / JCM 6121 / CCUG 31486 / LMG 2827 / NBRC 12203 / NCIMB 8253 / ATH 2.4.1.) (Rhodobacter sphaeroides) protein is Large ribosomal subunit protein uL15.